The primary structure comprises 331 residues: D-lactate dehydrogenase (331 aa).

NAD(+)-binding positions include 155-156 (HI), D175, 206-207 (VP), N212, 233-235 (AAR), and D259. The active site involves R235. E264 is a catalytic residue. H296 acts as the Proton donor in catalysis.

This sequence belongs to the D-isomer specific 2-hydroxyacid dehydrogenase family. In terms of assembly, homodimer.

The catalysed reaction is (R)-lactate + NAD(+) = pyruvate + NADH + H(+). The polypeptide is D-lactate dehydrogenase (Leuconostoc mesenteroides subsp. cremoris).